We begin with the raw amino-acid sequence, 586 residues long: Major facilitator superfamily domain-containing protein 6-like (586 aa).

Transmembrane regions (helical) follow at residues 50 to 70 (ILMG…AFLA) and 78 to 98 (MFLT…VLVP). Residues 218–237 (GPVNLSKPQGDTQTPDHSSK) are disordered. Over residues 223–237 (SKPQGDTQTPDHSSK) the composition is skewed to polar residues. The next 9 helical transmembrane spans lie at 240-260 (PWTF…AAPL), 284-304 (LWVW…ALVG), 318-338 (VIYF…STAF), 365-385 (LILL…VQDF), 397-417 (ELVM…FHPF), 428-448 (VGVL…YAFI), 454-474 (VLPV…AVGA), 494-514 (GHFY…VVLH), and 519-538 (VLYE…FLSI).

It belongs to the major facilitator superfamily. MFSD6 family.

The protein resides in the membrane. This Mus musculus (Mouse) protein is Major facilitator superfamily domain-containing protein 6-like (Mfsd6l).